Reading from the N-terminus, the 172-residue chain is Shikimate kinase (172 aa).

ATP is bound at residue 14–19; that stretch reads GAGKST. S18 contributes to the Mg(2+) binding site. Substrate-binding residues include D36, R60, and G82. R120 contributes to the ATP binding site. Substrate is bound at residue R139. Position 156 (Q156) interacts with ATP.

This sequence belongs to the shikimate kinase family. As to quaternary structure, monomer. The cofactor is Mg(2+).

The protein resides in the cytoplasm. It carries out the reaction shikimate + ATP = 3-phosphoshikimate + ADP + H(+). It functions in the pathway metabolic intermediate biosynthesis; chorismate biosynthesis; chorismate from D-erythrose 4-phosphate and phosphoenolpyruvate: step 5/7. Functionally, catalyzes the specific phosphorylation of the 3-hydroxyl group of shikimic acid using ATP as a cosubstrate. The sequence is that of Shikimate kinase from Vibrio parahaemolyticus serotype O3:K6 (strain RIMD 2210633).